The following is a 106-amino-acid chain: Small ribosomal subunit protein bS20 (106 aa).

Residues 1–32 (MAQKKPKRNLSALKRHRQSLKRRLRNKAKKSA) are compositionally biased toward basic residues. The segment at 1 to 33 (MAQKKPKRNLSALKRHRQSLKRRLRNKAKKSAI) is disordered.

Belongs to the bacterial ribosomal protein bS20 family.

Functionally, binds directly to 16S ribosomal RNA. This is Small ribosomal subunit protein bS20 (rpsT) from Thermus thermophilus (strain ATCC BAA-163 / DSM 7039 / HB27).